Here is a 211-residue protein sequence, read N- to C-terminus: HTH-type transcriptional regulator AlkX (211 aa).

In terms of domain architecture, HTH tetR-type spans 22–82 (ALLRDSVLDA…GYALRLADRL (61 aa)). Residues 45-64 (TLSDVARAAGISRQTIYNEF) constitute a DNA-binding region (H-T-H motif).

As to quaternary structure, homodimer.

It is found in the cytoplasm. With respect to regulation, DNA-binding activity may be regulated by fatty acids. Functionally, represses the expression of the alkB-rubAB operon, which encodes the alkane hydroxylase AlkB and the rubredoxins RubA and RubB. Acts by binding to the promoter region of the operon. In addition, EMSA analysis show that AlkX can bind to the promoter region of mmpS1 and mmpL3 and to the intragenic region of mmpL11, suggesting that it may participate in the regulatory network that controls the expression of MmpL lipid transporters. This is HTH-type transcriptional regulator AlkX from Mycobacterium tuberculosis (strain ATCC 25618 / H37Rv).